A 575-amino-acid polypeptide reads, in one-letter code: Acyloxyacyl hydrolase (575 aa).

Positions 1 to 25 (MKSPWRILVVSPLLLLPLHSSTSRA) are cleaved as a signal peptide. Residues 26–34 (HDNQPGTIR) constitute a propeptide that is removed on maturation. Residues 36-117 (DHYTCVGCVL…HTLEFCKQEP (82 aa)) form the Saposin B-type domain. The interval 37–69 (HYTCVGCVLVVSVIEQLAQVHNSTVQASMERLC) is important for enzyme activity, localization to cytoplasmic vesicles, and protein stability. 8 disulfide bridges follow: C40-C113, C43-C107, C69-C82, C122-C453, C159-C168, C205-C229, C248-C328, and C375-C459. N58 carries an N-linked (GlcNAc...) asparagine glycan. The segment at 172 to 176 (KLAIK) is lipopolysaccharide binding. Residues D183, D185, D187, Y189, D204, N206, D207, D209, V212, D222, D226, N228, N230, I232, and E244 each coordinate Ca(2+). An N-linked (GlcNAc...) asparagine glycan is attached at N206. S262 is an active-site residue. N466 is a glycosylation site (N-linked (GlcNAc...) asparagine).

As to quaternary structure, heterodimer of the large and small subunits; disulfide-linked. It depends on Ca(2+) as a cofactor. In terms of processing, cleaved into a large and a small subunit. The small subunit is N-glycosylated.

The protein localises to the secreted. It is found in the cytoplasmic vesicle. It catalyses the reaction a 3-(acyloxy)acyl derivative of bacterial toxin + H2O = a 3-hydroxyacyl derivative of bacterial toxin + a fatty acid + H(+). Its function is as follows. Removes the secondary (acyloxyacyl-linked) fatty acyl chains from the lipid A region of bacterial lipopolysaccharides (LPS). By breaking down LPS, terminates the host response to bacterial infection and prevents prolonged and damaging inflammatory responses. In peritoneal macrophages, seems to be important for recovery from a state of immune tolerance following infection by Gram-negative bacteria. This is Acyloxyacyl hydrolase from Oryctolagus cuniculus (Rabbit).